We begin with the raw amino-acid sequence, 167 residues long: NAD(P)H-quinone oxidoreductase subunit I, chloroplastic (167 aa).

4Fe-4S ferredoxin-type domains follow at residues 55–84 (GRIHFEFDKCIACEVCVRVCPIDLPVVDWK) and 95–124 (LNYSIDFGICIFCGNCVEYCPTNCLSMTEE). Positions 64, 67, 70, 74, 104, 107, 110, and 114 each coordinate [4Fe-4S] cluster.

The protein belongs to the complex I 23 kDa subunit family. As to quaternary structure, NDH is composed of at least 16 different subunits, 5 of which are encoded in the nucleus. It depends on [4Fe-4S] cluster as a cofactor.

It is found in the plastid. Its subcellular location is the chloroplast thylakoid membrane. The enzyme catalyses a plastoquinone + NADH + (n+1) H(+)(in) = a plastoquinol + NAD(+) + n H(+)(out). It carries out the reaction a plastoquinone + NADPH + (n+1) H(+)(in) = a plastoquinol + NADP(+) + n H(+)(out). In terms of biological role, NDH shuttles electrons from NAD(P)H:plastoquinone, via FMN and iron-sulfur (Fe-S) centers, to quinones in the photosynthetic chain and possibly in a chloroplast respiratory chain. The immediate electron acceptor for the enzyme in this species is believed to be plastoquinone. Couples the redox reaction to proton translocation, and thus conserves the redox energy in a proton gradient. This chain is NAD(P)H-quinone oxidoreductase subunit I, chloroplastic, found in Aethionema grandiflorum (Persian stone-cress).